A 560-amino-acid chain; its full sequence is Light-independent protochlorophyllide reductase subunit N (560 aa).

[4Fe-4S] cluster contacts are provided by cysteine 24, cysteine 49, and cysteine 109. The span at asparagine 173–serine 182 shows a compositional bias: low complexity. A disordered region spans residues asparagine 173–lysine 210. Over residues phenylalanine 196–phenylalanine 206 the composition is skewed to polar residues.

Belongs to the BchN/ChlN family. In terms of assembly, protochlorophyllide reductase is composed of three subunits; ChlL, ChlN and ChlB. Forms a heterotetramer of two ChlB and two ChlN subunits. [4Fe-4S] cluster is required as a cofactor.

The protein localises to the plastid. It is found in the chloroplast. The enzyme catalyses chlorophyllide a + oxidized 2[4Fe-4S]-[ferredoxin] + 2 ADP + 2 phosphate = protochlorophyllide a + reduced 2[4Fe-4S]-[ferredoxin] + 2 ATP + 2 H2O. Its pathway is porphyrin-containing compound metabolism; chlorophyll biosynthesis (light-independent). In terms of biological role, component of the dark-operative protochlorophyllide reductase (DPOR) that uses Mg-ATP and reduced ferredoxin to reduce ring D of protochlorophyllide (Pchlide) to form chlorophyllide a (Chlide). This reaction is light-independent. The NB-protein (ChlN-ChlB) is the catalytic component of the complex. The sequence is that of Light-independent protochlorophyllide reductase subunit N from Tetradesmus obliquus (Green alga).